The following is a 49-amino-acid chain: Defensin-like protein 1 (49 aa).

4 cysteine pairs are disulfide-bonded: Cys-3/Cys-49, Cys-14/Cys-35, Cys-20/Cys-43, and Cys-24/Cys-45.

It belongs to the DEFL family.

It is found in the secreted. Possesses antimicrobial activity sensitive to inorganic cations. Binds specifically to the fungal plasma membrane. Has no inhibitory effect on insect gut alpha-amylase. This Clitoria ternatea (Butterfly pea) protein is Defensin-like protein 1.